Here is a 233-residue protein sequence, read N- to C-terminus: Orotidine 5'-phosphate decarboxylase (233 aa).

Substrate contacts are provided by residues D9, K31, 58–67, T120, R182, Q191, G211, and R212; that span reads DLKLHDIPNT. K60 serves as the catalytic Proton donor.

This sequence belongs to the OMP decarboxylase family. Type 1 subfamily. In terms of assembly, homodimer.

The enzyme catalyses orotidine 5'-phosphate + H(+) = UMP + CO2. It participates in pyrimidine metabolism; UMP biosynthesis via de novo pathway; UMP from orotate: step 2/2. Catalyzes the decarboxylation of orotidine 5'-monophosphate (OMP) to uridine 5'-monophosphate (UMP). The chain is Orotidine 5'-phosphate decarboxylase from Listeria monocytogenes serovar 1/2a (strain ATCC BAA-679 / EGD-e).